The primary structure comprises 284 residues: 2-dehydro-3-deoxyphosphooctonate aldolase (284 aa).

It belongs to the KdsA family.

The protein localises to the cytoplasm. It catalyses the reaction D-arabinose 5-phosphate + phosphoenolpyruvate + H2O = 3-deoxy-alpha-D-manno-2-octulosonate-8-phosphate + phosphate. It functions in the pathway carbohydrate biosynthesis; 3-deoxy-D-manno-octulosonate biosynthesis; 3-deoxy-D-manno-octulosonate from D-ribulose 5-phosphate: step 2/3. It participates in bacterial outer membrane biogenesis; lipopolysaccharide biosynthesis. This chain is 2-dehydro-3-deoxyphosphooctonate aldolase, found in Escherichia coli O6:K15:H31 (strain 536 / UPEC).